Consider the following 319-residue polypeptide: N-acyl-aromatic-L-amino acid amidohydrolase (carboxylate-forming) (319 aa).

The segment at Met1–Asn210 is hydrolytic domain. Zn(2+) contacts are provided by His21 and Glu24. Substrate-binding positions include Arg63 and Asn70–Arg71. Zn(2+) is bound at residue His116. Glu178 and Tyr288 together coordinate substrate. The tract at residues Gln211–Thr318 is shielding domain. Thr318 carries the post-translational modification Phosphothreonine.

It belongs to the AspA/AstE family. Aspartoacylase subfamily. As to quaternary structure, exists as a mixture of homodimers and homotetramer, both catalytically active. Zn(2+) serves as cofactor.

It localises to the apical cell membrane. The protein resides in the cytoplasm. It carries out the reaction an N-acyl-aromatic L-alpha-amino acid + H2O = an aromatic L-alpha-amino acid + a carboxylate. It catalyses the reaction an N-acetyl-L-cysteine-S-conjugate + H2O = an S-substituted L-cysteine + acetate. Plays an important role in deacetylating mercapturic acids in kidney proximal tubules. Also acts on N-acetyl-aromatic amino acids. The sequence is that of N-acyl-aromatic-L-amino acid amidohydrolase (carboxylate-forming) (Acy3) from Rattus norvegicus (Rat).